A 169-amino-acid polypeptide reads, in one-letter code: Large ribosomal subunit protein uL10 (169 aa).

This sequence belongs to the universal ribosomal protein uL10 family. In terms of assembly, part of the ribosomal stalk of the 50S ribosomal subunit. The N-terminus interacts with L11 and the large rRNA to form the base of the stalk. The C-terminus forms an elongated spine to which L12 dimers bind in a sequential fashion forming a multimeric L10(L12)X complex.

Forms part of the ribosomal stalk, playing a central role in the interaction of the ribosome with GTP-bound translation factors. In Orientia tsutsugamushi (strain Boryong) (Rickettsia tsutsugamushi), this protein is Large ribosomal subunit protein uL10.